The sequence spans 214 residues: High frequency lysogenization protein HflD homolog (214 aa).

The protein belongs to the HflD family.

It is found in the cytoplasm. Its subcellular location is the cell inner membrane. The sequence is that of High frequency lysogenization protein HflD homolog from Chromohalobacter salexigens (strain ATCC BAA-138 / DSM 3043 / CIP 106854 / NCIMB 13768 / 1H11).